Reading from the N-terminus, the 81-residue chain is RNA-binding protein Hfq (81 aa).

The Sm domain occupies 11–71; it reads DIFLNSARKN…VSTITPLRPI (61 aa).

It belongs to the Hfq family. Homohexamer.

Its function is as follows. RNA chaperone that binds small regulatory RNA (sRNAs) and mRNAs to facilitate mRNA translational regulation in response to envelope stress, environmental stress and changes in metabolite concentrations. Also binds with high specificity to tRNAs. The sequence is that of RNA-binding protein Hfq from Clostridium acetobutylicum (strain ATCC 824 / DSM 792 / JCM 1419 / IAM 19013 / LMG 5710 / NBRC 13948 / NRRL B-527 / VKM B-1787 / 2291 / W).